The sequence spans 86 residues: MQQERDHKRDCCKLMPQTVKAFFKCLRFRRSSSSSSDMVKARARNEEKEEPSSIETSTRSLNVMRKGIRKQPVSSGKRGGVNDYDM.

A propeptide spanning residues 1 to 59 is cleaved from the precursor; that stretch reads MQQERDHKRDCCKLMPQTVKAFFKCLRFRRSSSSSSDMVKARARNEEKEEPSSIETSTR. A disordered region spans residues 31–86; the sequence is SSSSSSDMVKARARNEEKEEPSSIETSTRSLNVMRKGIRKQPVSSGKRGGVNDYDM. Residues 39–51 are compositionally biased toward basic and acidic residues; sequence VKARARNEEKEEP.

This sequence belongs to the brassicaceae elicitor peptide family.

In terms of biological role, elicitor of plant defense. In Arabidopsis thaliana (Mouse-ear cress), this protein is Elicitor peptide 5 (PEP5).